Reading from the N-terminus, the 291-residue chain is 4-hydroxy-tetrahydrodipicolinate synthase (291 aa).

T45 contributes to the pyruvate binding site. The active-site Proton donor/acceptor is Y131. The active-site Schiff-base intermediate with substrate is the K159. I202 lines the pyruvate pocket.

It belongs to the DapA family. As to quaternary structure, homotetramer; dimer of dimers.

Its subcellular location is the cytoplasm. The enzyme catalyses L-aspartate 4-semialdehyde + pyruvate = (2S,4S)-4-hydroxy-2,3,4,5-tetrahydrodipicolinate + H2O + H(+). Its pathway is amino-acid biosynthesis; L-lysine biosynthesis via DAP pathway; (S)-tetrahydrodipicolinate from L-aspartate: step 3/4. Its function is as follows. Catalyzes the condensation of (S)-aspartate-beta-semialdehyde [(S)-ASA] and pyruvate to 4-hydroxy-tetrahydrodipicolinate (HTPA). The sequence is that of 4-hydroxy-tetrahydrodipicolinate synthase from Methanosarcina barkeri (strain Fusaro / DSM 804).